A 319-amino-acid chain; its full sequence is Phosphate acyltransferase (319 aa).

It belongs to the PlsX family. As to quaternary structure, homodimer. Probably interacts with PlsY.

The protein resides in the cytoplasm. It catalyses the reaction a fatty acyl-[ACP] + phosphate = an acyl phosphate + holo-[ACP]. It functions in the pathway lipid metabolism; phospholipid metabolism. Catalyzes the reversible formation of acyl-phosphate (acyl-PO(4)) from acyl-[acyl-carrier-protein] (acyl-ACP). This enzyme utilizes acyl-ACP as fatty acyl donor, but not acyl-CoA. This chain is Phosphate acyltransferase, found in Chlamydia muridarum (strain MoPn / Nigg).